The sequence spans 555 residues: GPI-anchor transamidase component PIGS (555 aa).

At 2–18 (AAAGAAATHLEVARGKR) the chain is on the cytoplasmic side. The a cardiolipin site is built by Arg15 and Arg18. Residues 19–39 (AALFFAAVAIVLGLPLWWKTT) form a helical membrane-spanning segment. Residues 40–517 (ETYRASLPYS…LHLLYFPDDQ (478 aa)) are Lumenal-facing. 2 N-linked (GlcNAc...) asparagine glycosylation sites follow: Asn267 and Asn370. Residues 518 to 532 (KFAIYIPLFLPMAVP) form a helical membrane-spanning segment. Residues 533 to 555 (ILLSLVKIFLETRKSWRKPEKTD) lie on the Cytoplasmic side of the membrane.

Belongs to the PIGS family. In terms of assembly, heteropentamer. Part of the GPI-anchor transamidase complex, consisting of PIGK, PIGT, PIGS, PIGU and GAA1.

It localises to the endoplasmic reticulum membrane. It participates in glycolipid biosynthesis; glycosylphosphatidylinositol-anchor biosynthesis. Component of the glycosylphosphatidylinositol-anchor (GPI-anchor) transamidase (GPI-T) complex that catalyzes the formation of the linkage between a proprotein and a GPI-anchor and participates in GPI anchored protein biosynthesis. The chain is GPI-anchor transamidase component PIGS from Homo sapiens (Human).